The chain runs to 556 residues: Arginine--tRNA ligase (556 aa).

Positions 132–142 (ANPTGSLHLGH) match the 'HIGH' region motif.

It belongs to the class-I aminoacyl-tRNA synthetase family. In terms of assembly, monomer.

The protein localises to the cytoplasm. The catalysed reaction is tRNA(Arg) + L-arginine + ATP = L-arginyl-tRNA(Arg) + AMP + diphosphate. This chain is Arginine--tRNA ligase, found in Anoxybacillus flavithermus (strain DSM 21510 / WK1).